Consider the following 392-residue polypeptide: Selenide, water dikinase 1 (392 aa).

Cys-31 is an active-site residue. Residues Lys-32, 67–69 (GMD), Asp-87, Asp-110, and 161–164 (GGQT) contribute to the ATP site. Asp-69 contacts Mg(2+). Asp-110 lines the Mg(2+) pocket. Asp-265 serves as a coordination point for Mg(2+). Thr-387 carries the phosphothreonine modification.

The protein belongs to the selenophosphate synthase 1 family. Class II subfamily. As to quaternary structure, homodimer. The cofactor is Mg(2+).

The protein localises to the cell membrane. It localises to the nucleus membrane. It catalyses the reaction hydrogenselenide + ATP + H2O = selenophosphate + AMP + phosphate + 2 H(+). Functionally, synthesizes selenophosphate from selenide and ATP. This Danio rerio (Zebrafish) protein is Selenide, water dikinase 1 (sephs1).